Here is a 508-residue protein sequence, read N- to C-terminus: Photosystem II CP47 reaction center protein (508 aa).

6 helical membrane-spanning segments follow: residues 21–36 (AVHI…WAGS), 101–115 (IVFS…IWHW), 140–156 (GIHL…FGAF), 203–218 (IAAG…FHLS), 237–252 (VLSS…AFVV), and 457–472 (SFAL…HGAR).

It belongs to the PsbB/PsbC family. PsbB subfamily. PSII is composed of 1 copy each of membrane proteins PsbA, PsbB, PsbC, PsbD, PsbE, PsbF, PsbH, PsbI, PsbJ, PsbK, PsbL, PsbM, PsbT, PsbX, PsbY, PsbZ, Psb30/Ycf12, at least 3 peripheral proteins of the oxygen-evolving complex and a large number of cofactors. It forms dimeric complexes. The cofactor is Binds multiple chlorophylls. PSII binds additional chlorophylls, carotenoids and specific lipids..

It is found in the plastid. The protein resides in the chloroplast thylakoid membrane. Functionally, one of the components of the core complex of photosystem II (PSII). It binds chlorophyll and helps catalyze the primary light-induced photochemical processes of PSII. PSII is a light-driven water:plastoquinone oxidoreductase, using light energy to abstract electrons from H(2)O, generating O(2) and a proton gradient subsequently used for ATP formation. The polypeptide is Photosystem II CP47 reaction center protein (Ranunculus macranthus (Large buttercup)).